We begin with the raw amino-acid sequence, 931 residues long: Semaphorin-6C (931 aa).

A signal peptide spans Met1–Ala25. At Ala26–Pro605 the chain is on the extracellular side. Positions Pro31–Leu517 constitute a Sema domain. Asn71 is a glycosylation site (N-linked (GlcNAc...) asparagine). 4 disulfides stabilise this stretch: Cys112–Cys122, Cys140–Cys149, Cys263–Cys374, and Cys288–Cys333. Asn287 is a glycosylation site (N-linked (GlcNAc...) asparagine). An N-linked (GlcNAc...) asparagine glycan is attached at Asn438. Intrachain disulfides connect Cys480–Cys511, Cys520–Cys538, Cys526–Cys571, and Cys530–Cys546. The interval Asp556–Arg591 is disordered. The helical transmembrane segment at Leu606–Val626 threads the bilayer. The Cytoplasmic portion of the chain corresponds to Ser627–Phe931. 2 disordered regions span residues Leu655–Ala747 and His777–Phe931. Residues Pro693–Leu708 are compositionally biased toward low complexity. Residues Pro893 to Val906 are compositionally biased toward basic and acidic residues. Positions Ser911–Ala923 are enriched in pro residues.

The protein belongs to the semaphorin family.

The protein localises to the cell membrane. In terms of biological role, may be a stop signal for the dorsal root ganglion neurons in their target areas, and possibly also for other neurons. May also be involved in the maintenance and remodeling of neuronal connections. This is Semaphorin-6C (Sema6c) from Mus musculus (Mouse).